A 76-amino-acid polypeptide reads, in one-letter code: Accessory gland-specific peptide 57Dc (76 aa).

Positions 1–20 (MHGTHFLILLLLCGVLGSNG) are cleaved as a signal peptide.

CAMP-dependent phosphorylation. As to expression, lumen fluid of male accessory glands, becomes seminal fluid.

It localises to the secreted. Functionally, transferred from male to female during mating and may affect egglaying and behavior after mating. In Drosophila melanogaster (Fruit fly), this protein is Accessory gland-specific peptide 57Dc (Mst57Dc).